The chain runs to 874 residues: Pentatricopeptide repeat-containing protein At2g17140 (874 aa).

PPR repeat units follow at residues 111 to 145 (SVYLYNLLLESCIKERRVEFVSWLYKDMVLCGIAP), 146 to 180 (QTYTFNLLIRALCDSSCVDAARELFDEMPEKGCKP), 181 to 215 (NEFTFGILVRGYCKAGLTDKGLELLNAMESFGVLP), 216 to 250 (NKVIYNTIVSSFCREGRNDDSEKMVEKMREEGLVP), 251 to 285 (DIVTFNSRISALCKEGKVLDASRIFSDMELDEYLG), 290 to 320 (NSITYNLMLKGFCKVGLLEDAKTLFESIREN), 325 to 359 (SLQSYNIWLQGLVRHGKFIEAETVLKQMTDKGIGP), 360 to 394 (SIYSYNILMDGLCKLGMLSDAKTIVGLMKRNGVCP), 395 to 429 (DAVTYGCLLHGYCSVGKVDAAKSLLQEMMRNNCLP), 430 to 464 (NAYTCNILLHSLWKMGRISEAEELLRKMNEKGYGL), 465 to 499 (DTVTCNIIVDGLCGSGELDKAIEIVKGMRVHGSAA), 523 to 557 (DLITYSTLLNGLCKAGRFAEAKNLFAEMMGEKLQP), 558 to 592 (DSVAYNIFIHHFCKQGKISSAFRVLKDMEKKGCHK), 593 to 627 (SLETYNSLILGLGIKNQIFEIHGLMDEMKEKGISP), 628 to 662 (NICTYNTAIQYLCEGEKVEDATNLLDEMMQKNIAP), 663 to 693 (NVFSFKYLIEAFCKVPDFDMAQEVFETAVSI), 697 to 731 (KEGLYSLMFNELLAAGQLLKATELLEAVLDRGFEL), 732 to 766 (GTFLYKDLVESLCKKDELEVASGILHKMIDRGYGF), and 767 to 797 (DPAALMPVIDGLGKMGNKKEANSFADKMMEM).

It belongs to the PPR family. P subfamily.

This is Pentatricopeptide repeat-containing protein At2g17140 from Arabidopsis thaliana (Mouse-ear cress).